A 296-amino-acid chain; its full sequence is MSQKELWYETLHANFGQYFSVENVLFREKTEHQDLVIFENPELGRVMALDGVVQTTERDEFIYHEMMTHVPLLAHGQAKKVLIIGGGDGAMLREVSRHKNIEQITMVEIDAGVVEFCRQYLPNHSAGAYDDPRFKLVIDDGVNFVNQTTEKFDVIISDCTDPIGPGESLFTSVFYEGCARSLNEGGIFVAQNGVCFLQQDEAVNSHNKLSHYFSDVSFYQAAIPTYYGGIMTFAWATQNPALRQLDLATLQNRFAQAGLACRYYNPAIHVGSFALPQYLLDALTTIPKVIGVDSSE.

Residues 5–238 (ELWYETLHAN…GIMTFAWATQ (234 aa)) form the PABS domain. An S-methyl-5'-thioadenosine-binding site is contributed by glutamine 33. Residues histidine 64 and aspartate 88 each coordinate spermidine. S-methyl-5'-thioadenosine contacts are provided by residues glutamate 108 and 140-141 (DG). Aspartate 158 functions as the Proton acceptor in the catalytic mechanism. 158-161 (DCTD) is a spermidine binding site. S-methyl-5'-thioadenosine is bound at residue proline 165.

This sequence belongs to the spermidine/spermine synthase family. Homodimer or homotetramer.

It is found in the cytoplasm. It catalyses the reaction S-adenosyl 3-(methylsulfanyl)propylamine + putrescine = S-methyl-5'-thioadenosine + spermidine + H(+). It participates in amine and polyamine biosynthesis; spermidine biosynthesis; spermidine from putrescine: step 1/1. In terms of biological role, catalyzes the irreversible transfer of a propylamine group from the amino donor S-adenosylmethioninamine (decarboxy-AdoMet) to putrescine (1,4-diaminobutane) to yield spermidine. The sequence is that of Polyamine aminopropyltransferase from Yersinia pestis bv. Antiqua (strain Antiqua).